A 550-amino-acid polypeptide reads, in one-letter code: Hydroxylamine reductase (550 aa).

[2Fe-2S] cluster contacts are provided by C3, C6, C18, and C25. 8 residues coordinate hybrid [4Fe-2O-2S] cluster: H249, E273, C317, C405, C433, C458, E492, and K494. Position 405 is a cysteine persulfide (C405).

Belongs to the HCP family. The cofactor is [2Fe-2S] cluster. It depends on hybrid [4Fe-2O-2S] cluster as a cofactor.

The protein resides in the cytoplasm. The enzyme catalyses A + NH4(+) + H2O = hydroxylamine + AH2 + H(+). Its function is as follows. Catalyzes the reduction of hydroxylamine to form NH(3) and H(2)O. This chain is Hydroxylamine reductase, found in Shigella flexneri serotype 5b (strain 8401).